The following is a 49-amino-acid chain: uncharacterized protein (49 aa).

A helical transmembrane segment spans residues 31 to 48; that stretch reads PDLYTIIVSYFSIFSLFF.

Its subcellular location is the membrane. This is an uncharacterized protein from Saccharomyces cerevisiae (strain ATCC 204508 / S288c) (Baker's yeast).